The sequence spans 689 residues: Methionine--tRNA ligase (689 aa).

The 'HIGH' region signature appears at 15-25; that stretch reads PYANGPIHLGH. Zn(2+) contacts are provided by C146, C149, C159, and C162. The short motif at 332 to 336 is the 'KMSKS' region element; it reads KMSKS. K335 is a binding site for ATP. The interval 546-577 is disordered; it reads KDNLQPTEAPKADKKADKKVEKKATTGDPLTD. Basic and acidic residues predominate over residues 555–570; sequence PKADKKADKKVEKKAT. The tRNA-binding domain occupies 588 to 689; sequence DFAKLDLRIA…QGAKPGMRVK (102 aa).

The protein belongs to the class-I aminoacyl-tRNA synthetase family. MetG type 1 subfamily. Homodimer. The cofactor is Zn(2+).

Its subcellular location is the cytoplasm. It carries out the reaction tRNA(Met) + L-methionine + ATP = L-methionyl-tRNA(Met) + AMP + diphosphate. Functionally, is required not only for elongation of protein synthesis but also for the initiation of all mRNA translation through initiator tRNA(fMet) aminoacylation. This chain is Methionine--tRNA ligase, found in Shewanella denitrificans (strain OS217 / ATCC BAA-1090 / DSM 15013).